We begin with the raw amino-acid sequence, 268 residues long: Resolvase (268 aa).

A Tyr recombinase domain is found at 47–250; sequence ELPKYLLAPE…FALDVAARHR (204 aa). Residues R82, K114, H202, R205, and H228 contribute to the active site. The O-(3'-phospho-DNA)-tyrosine intermediate role is filled by Y237.

Belongs to the 'phage' integrase family.

In terms of biological role, acts as a repressor of transcription and as a site-specific resolvase that cleaves at the RfsF site. The polypeptide is Resolvase (resD) (Escherichia coli (strain K12)).